The sequence spans 228 residues: LexA repressor (228 aa).

The segment at residues 26–46 (FDEMKDALDLRSKSGIHRLIT) is a DNA-binding region (H-T-H motif). Catalysis depends on for autocatalytic cleavage activity residues Ser-149 and Lys-187.

It belongs to the peptidase S24 family. Homodimer.

It carries out the reaction Hydrolysis of Ala-|-Gly bond in repressor LexA.. In terms of biological role, represses a number of genes involved in the response to DNA damage (SOS response), including recA and lexA. In the presence of single-stranded DNA, RecA interacts with LexA causing an autocatalytic cleavage which disrupts the DNA-binding part of LexA, leading to derepression of the SOS regulon and eventually DNA repair. The polypeptide is LexA repressor (Cereibacter sphaeroides (strain ATCC 17025 / ATH 2.4.3) (Rhodobacter sphaeroides)).